Here is a 399-residue protein sequence, read N- to C-terminus: Carbamoyl phosphate synthase small chain (399 aa).

Residues 1 to 209 form a CPSase region; it reads MEKFKLLKLG…SAINKKLHTS (209 aa). Ser55, Gly261, and Gly263 together coordinate L-glutamine. The Glutamine amidotransferase type-1 domain maps to 213 to 399; it reads RIIVLDLGVK…VYIIYKSKSS (187 aa). Catalysis depends on Cys289, which acts as the Nucleophile. Leu290, Gln293, Asn329, Gly331, and Phe332 together coordinate L-glutamine. Active-site residues include His372 and Glu374.

The protein belongs to the CarA family. As to quaternary structure, composed of two chains; the small (or glutamine) chain promotes the hydrolysis of glutamine to ammonia, which is used by the large (or ammonia) chain to synthesize carbamoyl phosphate. Tetramer of heterodimers (alpha,beta)4.

It localises to the plastid. It is found in the chloroplast. The catalysed reaction is hydrogencarbonate + L-glutamine + 2 ATP + H2O = carbamoyl phosphate + L-glutamate + 2 ADP + phosphate + 2 H(+). It carries out the reaction L-glutamine + H2O = L-glutamate + NH4(+). The protein operates within amino-acid biosynthesis; L-arginine biosynthesis; carbamoyl phosphate from bicarbonate: step 1/1. It functions in the pathway pyrimidine metabolism; UMP biosynthesis via de novo pathway; (S)-dihydroorotate from bicarbonate: step 1/3. Functionally, small subunit of the glutamine-dependent carbamoyl phosphate synthetase (CPSase). CPSase catalyzes the formation of carbamoyl phosphate from the ammonia moiety of glutamine, carbonate, and phosphate donated by ATP, constituting the first step of 2 biosynthetic pathways, one leading to arginine and/or urea and the other to pyrimidine nucleotides. The small subunit (glutamine amidotransferase) binds and cleaves glutamine to supply the large subunit with the substrate ammonia. The chain is Carbamoyl phosphate synthase small chain from Cyanidium caldarium (Red alga).